Reading from the N-terminus, the 390-residue chain is Dual-specificity RNA methyltransferase RlmN (390 aa).

Residue E126 is the Proton acceptor of the active site. Residues 134–374 enclose the Radical SAM core domain; sequence TEDRGAVCLS…APVRTPRGQD (241 aa). A disulfide bridge links C141 with C379. Residues C148, C152, and C155 each coordinate [4Fe-4S] cluster. Residues 205–206, S237, 259–261, and N336 each bind S-adenosyl-L-methionine; these read GE and SLH. The active-site S-methylcysteine intermediate is the C379.

Belongs to the radical SAM superfamily. RlmN family. [4Fe-4S] cluster serves as cofactor.

It localises to the cytoplasm. It carries out the reaction adenosine(2503) in 23S rRNA + 2 reduced [2Fe-2S]-[ferredoxin] + 2 S-adenosyl-L-methionine = 2-methyladenosine(2503) in 23S rRNA + 5'-deoxyadenosine + L-methionine + 2 oxidized [2Fe-2S]-[ferredoxin] + S-adenosyl-L-homocysteine. The enzyme catalyses adenosine(37) in tRNA + 2 reduced [2Fe-2S]-[ferredoxin] + 2 S-adenosyl-L-methionine = 2-methyladenosine(37) in tRNA + 5'-deoxyadenosine + L-methionine + 2 oxidized [2Fe-2S]-[ferredoxin] + S-adenosyl-L-homocysteine. Functionally, specifically methylates position 2 of adenine 2503 in 23S rRNA and position 2 of adenine 37 in tRNAs. m2A2503 modification seems to play a crucial role in the proofreading step occurring at the peptidyl transferase center and thus would serve to optimize ribosomal fidelity. This Acidiphilium cryptum (strain JF-5) protein is Dual-specificity RNA methyltransferase RlmN.